The chain runs to 389 residues: GDSL esterase/lipase At5g14450 (389 aa).

Positions 1–30 (MKDNLERAKLMVSSTVFSWLLLCLFAVTTS) are cleaved as a signal peptide. The active-site Nucleophile is the serine 48. N-linked (GlcNAc...) asparagine glycosylation is found at asparagine 125 and asparagine 335. Residues aspartate 354 and histidine 357 contribute to the active site.

This sequence belongs to the 'GDSL' lipolytic enzyme family.

The protein resides in the secreted. The polypeptide is GDSL esterase/lipase At5g14450 (Arabidopsis thaliana (Mouse-ear cress)).